The following is a 302-amino-acid chain: Phosphoribosylaminoimidazole-succinocarboxamide synthase (302 aa).

Belongs to the SAICAR synthetase family.

The enzyme catalyses 5-amino-1-(5-phospho-D-ribosyl)imidazole-4-carboxylate + L-aspartate + ATP = (2S)-2-[5-amino-1-(5-phospho-beta-D-ribosyl)imidazole-4-carboxamido]succinate + ADP + phosphate + 2 H(+). The protein operates within purine metabolism; IMP biosynthesis via de novo pathway; 5-amino-1-(5-phospho-D-ribosyl)imidazole-4-carboxamide from 5-amino-1-(5-phospho-D-ribosyl)imidazole-4-carboxylate: step 1/2. This is Phosphoribosylaminoimidazole-succinocarboxamide synthase from Cupriavidus necator (strain ATCC 17699 / DSM 428 / KCTC 22496 / NCIMB 10442 / H16 / Stanier 337) (Ralstonia eutropha).